A 235-amino-acid polypeptide reads, in one-letter code: Small ribosomal subunit protein uS2c (235 aa).

This sequence belongs to the universal ribosomal protein uS2 family.

Its subcellular location is the plastid. It is found in the chloroplast. The chain is Small ribosomal subunit protein uS2c (rps2) from Cryptomeria japonica (Japanese cedar).